The chain runs to 153 residues: Cytochrome c-type biogenesis protein CcmE (153 aa).

Residues 1 to 8 (MTTRRGRR) lie on the Cytoplasmic side of the membrane. The chain crosses the membrane as a helical; Signal-anchor for type II membrane protein span at residues 9 to 29 (ALLIAGGVGLLALAAALVLNA). The Periplasmic portion of the chain corresponds to 30–153 (LRSNLVFFFS…PSATLQTEAR (124 aa)). Residues His-124 and Tyr-128 each coordinate heme.

This sequence belongs to the CcmE/CycJ family.

The protein localises to the cell inner membrane. Functionally, heme chaperone required for the biogenesis of c-type cytochromes. Transiently binds heme delivered by CcmC and transfers the heme to apo-cytochromes in a process facilitated by CcmF and CcmH. The protein is Cytochrome c-type biogenesis protein CcmE of Bordetella parapertussis (strain 12822 / ATCC BAA-587 / NCTC 13253).